The primary structure comprises 428 residues: Glutamate-1-semialdehyde 2,1-aminomutase 1 (428 aa).

Lys268 bears the N6-(pyridoxal phosphate)lysine mark.

The protein belongs to the class-III pyridoxal-phosphate-dependent aminotransferase family. HemL subfamily. As to quaternary structure, homodimer. The cofactor is pyridoxal 5'-phosphate.

It is found in the cytoplasm. It carries out the reaction (S)-4-amino-5-oxopentanoate = 5-aminolevulinate. The protein operates within porphyrin-containing compound metabolism; protoporphyrin-IX biosynthesis; 5-aminolevulinate from L-glutamyl-tRNA(Glu): step 2/2. The chain is Glutamate-1-semialdehyde 2,1-aminomutase 1 from Bacillus cereus (strain G9842).